The following is a 468-amino-acid chain: 6-phospho-beta-galactosidase (468 aa).

D-galactose 6-phosphate-binding residues include Gln19, His116, Asn159, Glu160, and Asn297. Glu160 functions as the Proton donor in the catalytic mechanism. Glu375 acts as the Nucleophile in catalysis. 4 residues coordinate D-galactose 6-phosphate: Ser428, Trp429, Lys435, and Tyr437.

It belongs to the glycosyl hydrolase 1 family.

It catalyses the reaction a 6-phospho-beta-D-galactoside + H2O = D-galactose 6-phosphate + an alcohol. It participates in carbohydrate metabolism; lactose degradation; D-galactose 6-phosphate and beta-D-glucose from lactose 6-phosphate: step 1/1. In Streptococcus pyogenes serotype M6 (strain ATCC BAA-946 / MGAS10394), this protein is 6-phospho-beta-galactosidase.